Consider the following 241-residue polypeptide: 1-(5-phosphoribosyl)-5-[(5-phosphoribosylamino)methylideneamino] imidazole-4-carboxamide isomerase (241 aa).

D8 functions as the Proton acceptor in the catalytic mechanism. D130 functions as the Proton donor in the catalytic mechanism.

Belongs to the HisA/HisF family.

It localises to the cytoplasm. It carries out the reaction 1-(5-phospho-beta-D-ribosyl)-5-[(5-phospho-beta-D-ribosylamino)methylideneamino]imidazole-4-carboxamide = 5-[(5-phospho-1-deoxy-D-ribulos-1-ylimino)methylamino]-1-(5-phospho-beta-D-ribosyl)imidazole-4-carboxamide. It functions in the pathway amino-acid biosynthesis; L-histidine biosynthesis; L-histidine from 5-phospho-alpha-D-ribose 1-diphosphate: step 4/9. The sequence is that of 1-(5-phosphoribosyl)-5-[(5-phosphoribosylamino)methylideneamino] imidazole-4-carboxamide isomerase from Leptospira interrogans serogroup Icterohaemorrhagiae serovar copenhageni (strain Fiocruz L1-130).